Consider the following 419-residue polypeptide: 4-hydroxyphenylpyruvate dioxygenase (419 aa).

2 consecutive VOC domains span residues 37 to 185 and 216 to 376; these read GYDH…LLSR and RIDH…LFTR. 3 residues coordinate Fe cation: His219, His302, and Glu387.

The protein belongs to the 4HPPD family. Fe cation serves as cofactor.

It catalyses the reaction 3-(4-hydroxyphenyl)pyruvate + O2 = homogentisate + CO2. Its pathway is amino-acid degradation; L-phenylalanine degradation; acetoacetate and fumarate from L-phenylalanine: step 3/6. The protein is 4-hydroxyphenylpyruvate dioxygenase (HPD4) of Pyricularia oryzae (strain 70-15 / ATCC MYA-4617 / FGSC 8958) (Rice blast fungus).